Reading from the N-terminus, the 288-residue chain is 4-hydroxy-tetrahydrodipicolinate synthase (288 aa).

Threonine 43 contributes to the pyruvate binding site. Tyrosine 131 serves as the catalytic Proton donor/acceptor. Lysine 160 (schiff-base intermediate with substrate) is an active-site residue. Position 200 (isoleucine 200) interacts with pyruvate.

It belongs to the DapA family. In terms of assembly, homotetramer; dimer of dimers.

The protein localises to the cytoplasm. The enzyme catalyses L-aspartate 4-semialdehyde + pyruvate = (2S,4S)-4-hydroxy-2,3,4,5-tetrahydrodipicolinate + H2O + H(+). It functions in the pathway amino-acid biosynthesis; L-lysine biosynthesis via DAP pathway; (S)-tetrahydrodipicolinate from L-aspartate: step 3/4. Its function is as follows. Catalyzes the condensation of (S)-aspartate-beta-semialdehyde [(S)-ASA] and pyruvate to 4-hydroxy-tetrahydrodipicolinate (HTPA). In Methanococcus aeolicus (strain ATCC BAA-1280 / DSM 17508 / OCM 812 / Nankai-3), this protein is 4-hydroxy-tetrahydrodipicolinate synthase.